Here is a 368-residue protein sequence, read N- to C-terminus: ATP-dependent (S)-NAD(P)H-hydrate dehydratase (368 aa).

One can recognise a YjeF C-terminal domain in the interval 3–359; that stretch reads SPSKKLLANV…DEVHGSFLDL (357 aa). (6S)-NADPHX is bound by residues Gly-120 and 173 to 179; that span reads NVVEFAR. Residues 217–221 and 236–245 each bind ATP; these read KGPHD and GGLKRSGGQG. Residue Asp-246 coordinates (6S)-NADPHX.

The protein belongs to the NnrD/CARKD family. It depends on Mg(2+) as a cofactor.

It is found in the cytoplasm. It carries out the reaction (6S)-NADHX + ATP = ADP + phosphate + NADH + H(+). The enzyme catalyses (6S)-NADPHX + ATP = ADP + phosphate + NADPH + H(+). In terms of biological role, catalyzes the dehydration of the S-form of NAD(P)HX at the expense of ATP, which is converted to ADP. Together with NAD(P)HX epimerase, which catalyzes the epimerization of the S- and R-forms, the enzyme allows the repair of both epimers of NAD(P)HX, a damaged form of NAD(P)H that is a result of enzymatic or heat-dependent hydration. The protein is ATP-dependent (S)-NAD(P)H-hydrate dehydratase of Ajellomyces capsulatus (strain G186AR / H82 / ATCC MYA-2454 / RMSCC 2432) (Darling's disease fungus).